The chain runs to 149 residues: Endoribonuclease YbeY (149 aa).

Zn(2+) is bound by residues H113, H117, and H123.

The protein belongs to the endoribonuclease YbeY family. It depends on Zn(2+) as a cofactor.

The protein resides in the cytoplasm. In terms of biological role, single strand-specific metallo-endoribonuclease involved in late-stage 70S ribosome quality control and in maturation of the 3' terminus of the 16S rRNA. The protein is Endoribonuclease YbeY of Saccharophagus degradans (strain 2-40 / ATCC 43961 / DSM 17024).